The primary structure comprises 687 residues: Homeobox-leucine zipper protein HDG12 (687 aa).

The disordered stretch occupies residues 1 to 32 (MEFLGDSQNHDSSETEKKNKKKKRFHRHTPHQ). Residues 8–17 (QNHDSSETEK) are compositionally biased toward basic and acidic residues. Residues 18–30 (KNKKKKRFHRHTP) show a composition bias toward basic residues. The homeobox DNA-binding region spans 21-80 (KKKRFHRHTPHQIQRLESTFNECQHPDEKQRNQLSRELGLAPRQIKFWFQNRRTQKKAQH). Residues 87–150 (ALKEENDKIR…LERVSSIAAK (64 aa)) are a coiled coil. The 235-residue stretch at 206–440 (SEMDKSLMTN…LQRMCERFTN (235 aa)) folds into the START domain.

This sequence belongs to the HD-ZIP homeobox family. Class IV subfamily. As to quaternary structure, interacts with BBM. Expressed in apical meristems and young epidermal tissue including trichomes and stipules. Expressed in lateral root tips, the L1 layer of apical inflorescence meristems and early flower primordia, carpel and stamen filament epidermis, stigma papillae, ovule primordia, nucellus and embryo.

It localises to the nucleus. Its function is as follows. Probable transcription factor that acts as a negative regulator of trichome branching in association with HDG11. Seems to promote cell differentiation. May regulate cell differentiation and proliferation during root and shoot meristem development. Acts as a positive regulator of SCL18/LAS expression. Involved, together with PDF2, in the regulation of flower organs development by promoting the expression of APETALA 3 (AP3) in the epidermis and internal cell layers of developing flowers. This chain is Homeobox-leucine zipper protein HDG12, found in Arabidopsis thaliana (Mouse-ear cress).